The following is an 855-amino-acid chain: Serine/threonine-protein kinase HAL5 (855 aa).

Disordered regions lie at residues 1-166 and 214-261; these read MGDE…VERQ and RRNS…GNGT. Serine 17 and serine 19 each carry phosphoserine. Positions 31–45 are enriched in polar residues; that stretch reads ISGSNNAAAPSSRPG. Over residues 57 to 74 the composition is skewed to low complexity; that stretch reads IITSNVSSPSISPVHSPV. Phosphoserine occurs at positions 68 and 72. Polar residues predominate over residues 94–114; it reads LSPSREPSLNSENEMFSQESF. Over residues 125–139 the composition is skewed to basic and acidic residues; it reads LLEREDLQNKKEEKA. Serine 160 is modified (phosphoserine). Residues 248–258 show a composition bias toward low complexity; that stretch reads GMNSNATNNVG. Serine 273, serine 277, serine 324, serine 333, serine 336, serine 358, serine 391, and serine 395 each carry phosphoserine. Residues 319–347 are disordered; the sequence is NKNVDSGDEKDADASVNSGDDGDNDSEAN. Disordered stretches follow at residues 401-427 and 457-497; these read SQTV…DGKN and LKSE…SHKP. A compositionally biased stretch (polar residues) spans 462–474; it reads TKGNNGEGRSNSN. Residues 503–837 form the Protein kinase domain; that stretch reads GKYIGVVGAG…IEQLLQSSWM (335 aa). ATP contacts are provided by residues 509 to 517 and lysine 546; that span reads VGAGAYGVV. Aspartate 688 serves as the catalytic Proton acceptor.

Belongs to the protein kinase superfamily. CAMK Ser/Thr protein kinase family. NPR/HAL subfamily. HAL5 sub-subfamily.

It carries out the reaction L-seryl-[protein] + ATP = O-phospho-L-seryl-[protein] + ADP + H(+). It catalyses the reaction L-threonyl-[protein] + ATP = O-phospho-L-threonyl-[protein] + ADP + H(+). In terms of biological role, protein kinase involved in salt tolerance and pH sensitivity, probably by regulating plasma membrane potential and cation influx. Positively controls the TRK1-TRK2 potassium transport system in response to potassium starvation. Stabilizes TRK1 in the plasma membrane by preventing its vacuolar sorting and degradation. Also stabilizes other plasma membrane nutrient transporters like CAN1, FUR4 and HXT1. May itself be subject to regulation by ARL1. This Saccharomyces cerevisiae (strain YJM789) (Baker's yeast) protein is Serine/threonine-protein kinase HAL5 (HAL5).